The chain runs to 368 residues: Dual-specificity RNA methyltransferase RlmN (368 aa).

Glu94 functions as the Proton acceptor in the catalytic mechanism. The region spanning Glu100–Asp334 is the Radical SAM core domain. Residues Cys107 and Cys339 are joined by a disulfide bond. Residues Cys114, Cys118, and Cys121 each contribute to the [4Fe-4S] cluster site. S-adenosyl-L-methionine is bound by residues Gly163–Glu164, Ser195, Ser217–His219, and Asn296. Catalysis depends on Cys339, which acts as the S-methylcysteine intermediate.

Belongs to the radical SAM superfamily. RlmN family. [4Fe-4S] cluster is required as a cofactor.

Its subcellular location is the cytoplasm. The enzyme catalyses adenosine(2503) in 23S rRNA + 2 reduced [2Fe-2S]-[ferredoxin] + 2 S-adenosyl-L-methionine = 2-methyladenosine(2503) in 23S rRNA + 5'-deoxyadenosine + L-methionine + 2 oxidized [2Fe-2S]-[ferredoxin] + S-adenosyl-L-homocysteine. The catalysed reaction is adenosine(37) in tRNA + 2 reduced [2Fe-2S]-[ferredoxin] + 2 S-adenosyl-L-methionine = 2-methyladenosine(37) in tRNA + 5'-deoxyadenosine + L-methionine + 2 oxidized [2Fe-2S]-[ferredoxin] + S-adenosyl-L-homocysteine. In terms of biological role, specifically methylates position 2 of adenine 2503 in 23S rRNA and position 2 of adenine 37 in tRNAs. m2A2503 modification seems to play a crucial role in the proofreading step occurring at the peptidyl transferase center and thus would serve to optimize ribosomal fidelity. The chain is Dual-specificity RNA methyltransferase RlmN from Aeromonas salmonicida (strain A449).